Reading from the N-terminus, the 232-residue chain is Myb-related protein 308 (232 aa).

2 consecutive HTH myb-type domains span residues 9–61 (KAHT…INYL) and 62–116 (RPDL…RRKL). 2 DNA-binding regions (H-T-H motif) span residues 37-61 (WRSL…INYL) and 89-112 (WSLI…NTHI).

Expressed in roots, stems, leaves, seed pods and flowers.

It localises to the nucleus. Its function is as follows. Transcription factor. The polypeptide is Myb-related protein 308 (Antirrhinum majus (Garden snapdragon)).